The chain runs to 660 residues: DNA mismatch repair protein MutL (660 aa).

Residues 414-433 (SSVKHASRPQNTFTETDHPN) form a disordered region.

This sequence belongs to the DNA mismatch repair MutL/HexB family.

Functionally, this protein is involved in the repair of mismatches in DNA. It is required for dam-dependent methyl-directed DNA mismatch repair. May act as a 'molecular matchmaker', a protein that promotes the formation of a stable complex between two or more DNA-binding proteins in an ATP-dependent manner without itself being part of a final effector complex. This chain is DNA mismatch repair protein MutL, found in Streptococcus pyogenes serotype M5 (strain Manfredo).